The chain runs to 198 residues: Pyridoxal 5'-phosphate synthase subunit PdxT (198 aa).

Residue Gly-49–Ser-51 participates in L-glutamine binding. Catalysis depends on Cys-81, which acts as the Nucleophile. L-glutamine-binding positions include Arg-113 and Ile-141–Arg-142. Catalysis depends on charge relay system residues His-177 and Glu-179.

It belongs to the glutaminase PdxT/SNO family. As to quaternary structure, in the presence of PdxS, forms a dodecamer of heterodimers. Only shows activity in the heterodimer.

It carries out the reaction aldehydo-D-ribose 5-phosphate + D-glyceraldehyde 3-phosphate + L-glutamine = pyridoxal 5'-phosphate + L-glutamate + phosphate + 3 H2O + H(+). It catalyses the reaction L-glutamine + H2O = L-glutamate + NH4(+). The protein operates within cofactor biosynthesis; pyridoxal 5'-phosphate biosynthesis. In terms of biological role, catalyzes the hydrolysis of glutamine to glutamate and ammonia as part of the biosynthesis of pyridoxal 5'-phosphate. The resulting ammonia molecule is channeled to the active site of PdxS. In Mycobacterium ulcerans (strain Agy99), this protein is Pyridoxal 5'-phosphate synthase subunit PdxT.